The following is a 605-amino-acid chain: Alpha-1,3-galactosidase A (605 aa).

Positions 1-20 (MKKYLHILPACFLFYAAAHA) are cleaved as a signal peptide. PbH1 repeat units lie at residues 256–278 (SKNI…VSQY), 312–334 (KGKV…NVHG), 421–443 (TPEV…LVTT), 444–466 (PRKV…LIEA), 477–507 (VKDV…HPSN), and 517–547 (HQNI…LFRN).

It belongs to the glycosyl hydrolase 110 family. A subfamily.

The enzyme catalyses Hydrolysis of terminal, non-reducing branched (1-&gt;3)-alpha-D-galactosidic residues, producing free D-galactose.. It catalyses the reaction Hydrolysis of terminal, non-reducing alpha-D-galactose residues in alpha-D-galactosides, including galactose oligosaccharides, galactomannans and galactolipids.. Alpha-galactosidase that specifically removes branched alpha-1,3-linked galactose residues present in blood group B antigens. Has no activity toward linear alpha-1,3-linked galactose residues. This chain is Alpha-1,3-galactosidase A (glaA), found in Bacteroides fragilis (strain YCH46).